An 88-amino-acid chain; its full sequence is Large ribosomal subunit protein uL23c (88 aa).

Belongs to the universal ribosomal protein uL23 family. Part of the 50S ribosomal subunit.

The protein resides in the plastid. It is found in the chloroplast. Functionally, binds to 23S rRNA. The chain is Large ribosomal subunit protein uL23c (rpl23) from Spirogyra maxima (Green alga).